The chain runs to 234 residues: Opacity protein opA65 (234 aa).

Ala1 is a signal peptide. The segment at 154 to 179 (TVTPKPKNGTQGGPVKSTSPIPAYHE) is disordered.

Belongs to the opacity porin family.

It localises to the cell outer membrane. Its function is as follows. Implicated in a number of adherence functions. OPA proteins are implicated in pathogenesis and are subject to phase variation. This Neisseria gonorrhoeae protein is Opacity protein opA65.